We begin with the raw amino-acid sequence, 286 residues long: MRRDDNWFTEVLEEEGMAFSLRVREKLHEERTAFQHIEVYETEAWGRLLVIDGCVMLTSRDNFVYHEMMSHPALFTHPDPRRVAIIGGGDCGMLREVLKHPGIESVVQVDIDAGVTRAAERYFPELTEANDDPRATLLFDDGVAWIQDQPAGSLDVVIVDSTDPVGVAEGLFGPGFLGQVYRVLGDQGLMVQQSESPILHRDTILERLHGHMRGSGFAPVVTLPYPVVSYPSGWWSATLASKGPHPAAFRESDARAKAFATLYYNADIHRAALAAPEFCKGLLTDQ.

Positions 5–242 constitute a PABS domain; the sequence is DNWFTEVLEE…GWWSATLASK (238 aa). Glutamine 35 serves as a coordination point for S-methyl-5'-thioadenosine. Residues histidine 66 and aspartate 90 each contribute to the spermidine site. Residues aspartate 110 and 141 to 142 each bind S-methyl-5'-thioadenosine; that span reads DG. Residue aspartate 160 is the Proton acceptor of the active site. 160-163 is a binding site for spermidine; that stretch reads DSTD.

It belongs to the spermidine/spermine synthase family. As to quaternary structure, homodimer or homotetramer.

Its subcellular location is the cytoplasm. The catalysed reaction is S-adenosyl 3-(methylsulfanyl)propylamine + putrescine = S-methyl-5'-thioadenosine + spermidine + H(+). Its pathway is amine and polyamine biosynthesis; spermidine biosynthesis; spermidine from putrescine: step 1/1. Functionally, catalyzes the irreversible transfer of a propylamine group from the amino donor S-adenosylmethioninamine (decarboxy-AdoMet) to putrescine (1,4-diaminobutane) to yield spermidine. In Alkalilimnicola ehrlichii (strain ATCC BAA-1101 / DSM 17681 / MLHE-1), this protein is Polyamine aminopropyltransferase.